The chain runs to 257 residues: Imidazole glycerol phosphate synthase subunit HisF (257 aa).

Active-site residues include D11 and D130.

The protein belongs to the HisA/HisF family. In terms of assembly, heterodimer of HisH and HisF.

Its subcellular location is the cytoplasm. The catalysed reaction is 5-[(5-phospho-1-deoxy-D-ribulos-1-ylimino)methylamino]-1-(5-phospho-beta-D-ribosyl)imidazole-4-carboxamide + L-glutamine = D-erythro-1-(imidazol-4-yl)glycerol 3-phosphate + 5-amino-1-(5-phospho-beta-D-ribosyl)imidazole-4-carboxamide + L-glutamate + H(+). The protein operates within amino-acid biosynthesis; L-histidine biosynthesis; L-histidine from 5-phospho-alpha-D-ribose 1-diphosphate: step 5/9. Functionally, IGPS catalyzes the conversion of PRFAR and glutamine to IGP, AICAR and glutamate. The HisF subunit catalyzes the cyclization activity that produces IGP and AICAR from PRFAR using the ammonia provided by the HisH subunit. The chain is Imidazole glycerol phosphate synthase subunit HisF from Vibrio parahaemolyticus serotype O3:K6 (strain RIMD 2210633).